Consider the following 331-residue polypeptide: Glutamyl-Q tRNA(Asp) synthetase (331 aa).

Polar residues predominate over residues 1-30; the sequence is MVQQAVIQRSANQQLSNQRSANQRATNQPT. The interval 1-36 is disordered; sequence MVQQAVIQRSANQQLSNQRSANQRATNQPTEYVGRF. Residues 35 to 39 and Glu-71 each bind L-glutamate; that span reads RFAPS. Residues 38-48 carry the 'HIGH' region motif; it reads PSPSGDLHFGS. Zn(2+) is bound by residues Cys-127, Cys-129, Tyr-141, and Cys-145. Residues Tyr-198 and Arg-216 each coordinate L-glutamate. The short motif at 254 to 258 is the 'KMSKS' region element; sequence KLSKQ. Residue Lys-257 coordinates ATP.

It belongs to the class-I aminoacyl-tRNA synthetase family. GluQ subfamily. Zn(2+) is required as a cofactor.

Functionally, catalyzes the tRNA-independent activation of glutamate in presence of ATP and the subsequent transfer of glutamate onto a tRNA(Asp). Glutamate is transferred on the 2-amino-5-(4,5-dihydroxy-2-cyclopenten-1-yl) moiety of the queuosine in the wobble position of the QUC anticodon. In Yersinia pseudotuberculosis serotype I (strain IP32953), this protein is Glutamyl-Q tRNA(Asp) synthetase.